A 370-amino-acid polypeptide reads, in one-letter code: DNA replication and repair protein RecF (370 aa).

30 to 37 (GENAQGKT) provides a ligand contact to ATP.

This sequence belongs to the RecF family.

Its subcellular location is the cytoplasm. Its function is as follows. The RecF protein is involved in DNA metabolism; it is required for DNA replication and normal SOS inducibility. RecF binds preferentially to single-stranded, linear DNA. It also seems to bind ATP. The sequence is that of DNA replication and repair protein RecF from Staphylococcus carnosus (strain TM300).